The following is a 475-amino-acid chain: Bifunctional protein HldE (475 aa).

Residues 1 to 318 (MKITLPEFEK…ANALYTEQET (318 aa)) are ribokinase. Residue 195 to 198 (NMSE) participates in ATP binding. Aspartate 264 is a catalytic residue. The tract at residues 344–475 (MTNGCFDILH…DIIKTIRERG (132 aa)) is cytidylyltransferase.

It in the N-terminal section; belongs to the carbohydrate kinase PfkB family. This sequence in the C-terminal section; belongs to the cytidylyltransferase family. As to quaternary structure, homodimer.

The catalysed reaction is D-glycero-beta-D-manno-heptose 7-phosphate + ATP = D-glycero-beta-D-manno-heptose 1,7-bisphosphate + ADP + H(+). The enzyme catalyses D-glycero-beta-D-manno-heptose 1-phosphate + ATP + H(+) = ADP-D-glycero-beta-D-manno-heptose + diphosphate. It participates in nucleotide-sugar biosynthesis; ADP-L-glycero-beta-D-manno-heptose biosynthesis; ADP-L-glycero-beta-D-manno-heptose from D-glycero-beta-D-manno-heptose 7-phosphate: step 1/4. The protein operates within nucleotide-sugar biosynthesis; ADP-L-glycero-beta-D-manno-heptose biosynthesis; ADP-L-glycero-beta-D-manno-heptose from D-glycero-beta-D-manno-heptose 7-phosphate: step 3/4. Functionally, catalyzes the phosphorylation of D-glycero-D-manno-heptose 7-phosphate at the C-1 position to selectively form D-glycero-beta-D-manno-heptose-1,7-bisphosphate. In terms of biological role, catalyzes the ADP transfer from ATP to D-glycero-beta-D-manno-heptose 1-phosphate, yielding ADP-D-glycero-beta-D-manno-heptose. This Aeromonas hydrophila subsp. hydrophila (strain ATCC 7966 / DSM 30187 / BCRC 13018 / CCUG 14551 / JCM 1027 / KCTC 2358 / NCIMB 9240 / NCTC 8049) protein is Bifunctional protein HldE.